A 342-amino-acid chain; its full sequence is Putative aryl-alcohol dehydrogenase AAD16 (342 aa).

It belongs to the aldo/keto reductase family. Aldo/keto reductase 2 subfamily.

Its function is as follows. Putative aryl-alcohol dehydrogenase. The chain is Putative aryl-alcohol dehydrogenase AAD16 from Saccharomyces cerevisiae (strain ATCC 204508 / S288c) (Baker's yeast).